A 498-amino-acid chain; its full sequence is Probable cytosol aminopeptidase (498 aa).

Residues Lys-263 and Asp-268 each contribute to the Mn(2+) site. Residue Lys-275 is part of the active site. Asp-286, Asp-345, and Glu-347 together coordinate Mn(2+). Residue Arg-349 is part of the active site.

This sequence belongs to the peptidase M17 family. It depends on Mn(2+) as a cofactor.

It is found in the cytoplasm. It catalyses the reaction Release of an N-terminal amino acid, Xaa-|-Yaa-, in which Xaa is preferably Leu, but may be other amino acids including Pro although not Arg or Lys, and Yaa may be Pro. Amino acid amides and methyl esters are also readily hydrolyzed, but rates on arylamides are exceedingly low.. The catalysed reaction is Release of an N-terminal amino acid, preferentially leucine, but not glutamic or aspartic acids.. In terms of biological role, presumably involved in the processing and regular turnover of intracellular proteins. Catalyzes the removal of unsubstituted N-terminal amino acids from various peptides. This is Probable cytosol aminopeptidase from Rhodopseudomonas palustris (strain BisA53).